Consider the following 376-residue polypeptide: Carbamoyl phosphate synthase small chain (376 aa).

Residues 1 to 184 form a CPSase region; it reads MKAILALADG…SEGYQQQTGE (184 aa). Residues serine 45, glycine 236, and glycine 238 each contribute to the L-glutamine site. The region spanning 188 to 374 is the Glutamine amidotransferase type-1 domain; that stretch reads KVVAYDFGIK…ADLMEKNRQS (187 aa). Residue cysteine 263 is the Nucleophile of the active site. Leucine 264, glutamine 267, asparagine 305, glycine 307, and phenylalanine 308 together coordinate L-glutamine. Active-site residues include histidine 347 and glutamate 349.

This sequence belongs to the CarA family. In terms of assembly, composed of two chains; the small (or glutamine) chain promotes the hydrolysis of glutamine to ammonia, which is used by the large (or ammonia) chain to synthesize carbamoyl phosphate. Tetramer of heterodimers (alpha,beta)4.

The enzyme catalyses hydrogencarbonate + L-glutamine + 2 ATP + H2O = carbamoyl phosphate + L-glutamate + 2 ADP + phosphate + 2 H(+). The catalysed reaction is L-glutamine + H2O = L-glutamate + NH4(+). It functions in the pathway amino-acid biosynthesis; L-arginine biosynthesis; carbamoyl phosphate from bicarbonate: step 1/1. Its pathway is pyrimidine metabolism; UMP biosynthesis via de novo pathway; (S)-dihydroorotate from bicarbonate: step 1/3. In terms of biological role, small subunit of the glutamine-dependent carbamoyl phosphate synthetase (CPSase). CPSase catalyzes the formation of carbamoyl phosphate from the ammonia moiety of glutamine, carbonate, and phosphate donated by ATP, constituting the first step of 2 biosynthetic pathways, one leading to arginine and/or urea and the other to pyrimidine nucleotides. The small subunit (glutamine amidotransferase) binds and cleaves glutamine to supply the large subunit with the substrate ammonia. The sequence is that of Carbamoyl phosphate synthase small chain from Syntrophotalea carbinolica (strain DSM 2380 / NBRC 103641 / GraBd1) (Pelobacter carbinolicus).